Consider the following 37-residue polypeptide: MKVKPSVKKICDKCKVIRRHGRVMVICDNLRHKQRQG.

Belongs to the bacterial ribosomal protein bL36 family.

The chain is Large ribosomal subunit protein bL36 from Streptomyces griseus subsp. griseus (strain JCM 4626 / CBS 651.72 / NBRC 13350 / KCC S-0626 / ISP 5235).